We begin with the raw amino-acid sequence, 87 residues long: U15-lycotoxin-Ls1h (87 aa).

The first 20 residues, 1–20, serve as a signal peptide directing secretion; it reads MNSKIFAVLLLLGLLSCVLS. The WAP domain maps to 21–66; it reads DQYCPKSSITACKKMNTRNDCCKDDDCTGGSWCCATPCGNFCKYPT. Intrachain disulfides connect cysteine 24–cysteine 54, cysteine 32–cysteine 58, cysteine 41–cysteine 53, cysteine 42–cysteine 80, and cysteine 47–cysteine 62.

Belongs to the venom protein 11 family. 01 (wap-1) subfamily. Post-translationally, contains 5 disulfide bonds. Expressed by the venom gland.

The protein localises to the secreted. Has antibacterial activity. The chain is U15-lycotoxin-Ls1h from Lycosa singoriensis (Wolf spider).